The sequence spans 82 residues: MSDKARTLQGKVISNKMDKSITVAIERQVKHPIYGKYIKRTTKIHAHDETNQCNEGDFVAISQCRPLSKTKSWTLAEVVTKA.

The protein belongs to the universal ribosomal protein uS17 family. In terms of assembly, part of the 30S ribosomal subunit.

One of the primary rRNA binding proteins, it binds specifically to the 5'-end of 16S ribosomal RNA. This is Small ribosomal subunit protein uS17 from Shewanella frigidimarina (strain NCIMB 400).